The following is a 688-amino-acid chain: Potassium-transporting ATPase ATP-binding subunit (688 aa).

The next 4 membrane-spanning stretches (helical) occupy residues 35–55 (VMMVVWCCCVLLTIVCGVQFA), 62–82 (AVFSLGVTAWLWFTLLFANLA), 219–239 (IALSILLVALTLVFLLAVVTL), and 260–280 (VLVALLVCLIPTTIGGLLSAI). Asp-313 acts as the 4-aspartylphosphate intermediate in catalysis. ATP-binding positions include Asp-350, Glu-354, 383–390 (FSAQTRMS), and Lys-401. Asp-524 and Asp-528 together coordinate Mg(2+). Transmembrane regions (helical) follow at residues 594 to 614 (FAILPAAFITTYPQLGALNLM), 622 to 642 (AILSAVIFNALIIIGLIPLAL), and 668 to 688 (VVLPFIGIKVIDLFLTLMGWI).

Belongs to the cation transport ATPase (P-type) (TC 3.A.3) family. Type IA subfamily. In terms of assembly, the system is composed of three essential subunits: KdpA, KdpB and KdpC.

The protein localises to the cell inner membrane. The enzyme catalyses K(+)(out) + ATP + H2O = K(+)(in) + ADP + phosphate + H(+). Functionally, part of the high-affinity ATP-driven potassium transport (or Kdp) system, which catalyzes the hydrolysis of ATP coupled with the electrogenic transport of potassium into the cytoplasm. This subunit is responsible for energy coupling to the transport system and for the release of the potassium ions to the cytoplasm. This chain is Potassium-transporting ATPase ATP-binding subunit, found in Tolumonas auensis (strain DSM 9187 / NBRC 110442 / TA 4).